The sequence spans 501 residues: 7-alpha-hydroxycholest-4-en-3-one 12-alpha-hydroxylase (501 aa).

Residues methionine 1–leucine 21 traverse the membrane as a helical segment. Residue serine 326 is modified to Phosphoserine. Cysteine 440 contributes to the heme binding site.

Belongs to the cytochrome P450 family. It depends on heme as a cofactor. Liver.

The protein resides in the endoplasmic reticulum membrane. It is found in the microsome membrane. The enzyme catalyses 7alpha-hydroxycholest-4-en-3-one + reduced [NADPH--hemoprotein reductase] + O2 = 7alpha,12alpha-dihydroxycholest-4-en-3-one + oxidized [NADPH--hemoprotein reductase] + H2O + H(+). It carries out the reaction 5beta-cholestane-3alpha,7alpha-diol + reduced [NADPH--hemoprotein reductase] + O2 = 5beta-cholestane-3alpha,7alpha,12alpha-triol + oxidized [NADPH--hemoprotein reductase] + H2O + H(+). The catalysed reaction is chenodeoxycholate + reduced [NADPH--hemoprotein reductase] + O2 = cholate + oxidized [NADPH--hemoprotein reductase] + H2O + H(+). Its pathway is lipid metabolism; bile acid biosynthesis. A cytochrome P450 monooxygenase involved in primary bile acid biosynthesis. Catalyzes the 12alpha-hydroxylation of 7alpha-hydroxy-4-cholesten-3-one, an intermediate metabolite in cholic acid biosynthesis. Controls biliary balance of cholic acid and chenodeoxycholic acid, ultimately regulating the intestinal absorption of dietary lipids. Mechanistically, uses molecular oxygen inserting one oxygen atom into a substrate, and reducing the second into a water molecule, with two electrons provided by NADPH via cytochrome P450 reductase (CPR; NADPH--hemoprotein reductase). The sequence is that of 7-alpha-hydroxycholest-4-en-3-one 12-alpha-hydroxylase from Homo sapiens (Human).